The sequence spans 316 residues: 4-hydroxy-3-methylbut-2-enyl diphosphate reductase (316 aa).

Cys-12 provides a ligand contact to [4Fe-4S] cluster. The (2E)-4-hydroxy-3-methylbut-2-enyl diphosphate site is built by His-41 and His-74. Dimethylallyl diphosphate-binding residues include His-41 and His-74. The isopentenyl diphosphate site is built by His-41 and His-74. Residue Cys-96 coordinates [4Fe-4S] cluster. (2E)-4-hydroxy-3-methylbut-2-enyl diphosphate is bound at residue His-124. His-124 lines the dimethylallyl diphosphate pocket. Isopentenyl diphosphate is bound at residue His-124. Glu-126 acts as the Proton donor in catalysis. Thr-167 lines the (2E)-4-hydroxy-3-methylbut-2-enyl diphosphate pocket. Residue Cys-197 coordinates [4Fe-4S] cluster. Positions 225, 226, 227, and 269 each coordinate (2E)-4-hydroxy-3-methylbut-2-enyl diphosphate. Dimethylallyl diphosphate is bound by residues Ser-225, Ser-226, Asn-227, and Ser-269. Isopentenyl diphosphate-binding residues include Ser-225, Ser-226, Asn-227, and Ser-269.

Belongs to the IspH family. Homodimer. [4Fe-4S] cluster is required as a cofactor.

It catalyses the reaction isopentenyl diphosphate + 2 oxidized [2Fe-2S]-[ferredoxin] + H2O = (2E)-4-hydroxy-3-methylbut-2-enyl diphosphate + 2 reduced [2Fe-2S]-[ferredoxin] + 2 H(+). The enzyme catalyses dimethylallyl diphosphate + 2 oxidized [2Fe-2S]-[ferredoxin] + H2O = (2E)-4-hydroxy-3-methylbut-2-enyl diphosphate + 2 reduced [2Fe-2S]-[ferredoxin] + 2 H(+). It functions in the pathway isoprenoid biosynthesis; dimethylallyl diphosphate biosynthesis; dimethylallyl diphosphate from (2E)-4-hydroxy-3-methylbutenyl diphosphate: step 1/1. Its pathway is isoprenoid biosynthesis; isopentenyl diphosphate biosynthesis via DXP pathway; isopentenyl diphosphate from 1-deoxy-D-xylulose 5-phosphate: step 6/6. Catalyzes the conversion of 1-hydroxy-2-methyl-2-(E)-butenyl 4-diphosphate (HMBPP) into a mixture of isopentenyl diphosphate (IPP) and dimethylallyl diphosphate (DMAPP). Acts in the terminal step of the DOXP/MEP pathway for isoprenoid precursor biosynthesis. This chain is 4-hydroxy-3-methylbut-2-enyl diphosphate reductase, found in Salmonella schwarzengrund (strain CVM19633).